Here is a 459-residue protein sequence, read N- to C-terminus: SLIT-ROBO Rho GTPase-activating protein 2C (459 aa).

Positions 22 to 325 (KEIRAQLTEQ…AVENLDATSD (304 aa)) constitute an F-BAR domain. Over residues 181–202 (LKEAEKQEEKQIGKSVKQEDRQ) the composition is skewed to basic and acidic residues. A disordered region spans residues 181–211 (LKEAEKQEEKQIGKSVKQEDRQTPCSPDSTA). A coiled-coil region spans residues 363–401 (QSELVQRCQQLQSRLSTLKIENEEVKKTMEATLQTIQDI).

As to quaternary structure, homodimer. Interacts (via F-BAR domain) with SRGAP2/SRGAP2A (via F-BAR domain); formation of the heterodimer inhibits SRGAP2/SRGAP2A function. Ubiquitously expressed with higher expression in cerebellum. Probably expressed in fetal and adult neurons (at protein level).

In terms of biological role, human-specific protein that acts as a key modifier of cortical connectivity in the human brain. Acts by inhibiting the functions of ancestral paralog SRGAP2/SRGAP2A, a postsynaptic protein that regulates excitatory and inhibitory synapse maturation and density in cortical pyramidal neurons. SRGAP2C is unstable but is able to heterodimerize with SRGAP2/SRGAP2A, thereby reducing SRGAP2/SRGAP2A levels through proteasome-dependent degradation. Inhibition of SRGAP2/SRGAP2A by SRGAP2C leads to an increase in synaptic density and protracted synaptic maturation of both excitatory and inhibitory synapses. Modifies cortical circuit connectivity by increasing the number of local and long-range cortical inputs received by layer 2/3 pyramidal neurons. Also able to increase the probability of sensory-evoked responses by layer 2/3 pyramidal neurons. In Homo sapiens (Human), this protein is SLIT-ROBO Rho GTPase-activating protein 2C.